Consider the following 429-residue polypeptide: Ribosomal RNA small subunit methyltransferase B (429 aa).

Residues C254 to K260, D277, D303, and D322 contribute to the S-adenosyl-L-methionine site. C375 acts as the Nucleophile in catalysis. Residues A397–D419 form a disordered region. A compositionally biased stretch (polar residues) spans E400 to L412.

It belongs to the class I-like SAM-binding methyltransferase superfamily. RsmB/NOP family.

It localises to the cytoplasm. It carries out the reaction cytidine(967) in 16S rRNA + S-adenosyl-L-methionine = 5-methylcytidine(967) in 16S rRNA + S-adenosyl-L-homocysteine + H(+). Its function is as follows. Specifically methylates the cytosine at position 967 (m5C967) of 16S rRNA. This Salmonella enteritidis PT4 (strain P125109) protein is Ribosomal RNA small subunit methyltransferase B.